A 170-amino-acid polypeptide reads, in one-letter code: Urease accessory protein UreE (170 aa).

The protein belongs to the UreE family.

Its subcellular location is the cytoplasm. Its function is as follows. Involved in urease metallocenter assembly. Binds nickel. Probably functions as a nickel donor during metallocenter assembly. The sequence is that of Urease accessory protein UreE from Helicobacter pylori (strain P12).